The sequence spans 441 residues: ATP-dependent protease ATPase subunit HslU (441 aa).

ATP-binding positions include Ile18, 60–65 (GVGKTE), Asp254, Glu319, and Arg391.

It belongs to the ClpX chaperone family. HslU subfamily. In terms of assembly, a double ring-shaped homohexamer of HslV is capped on each side by a ring-shaped HslU homohexamer. The assembly of the HslU/HslV complex is dependent on binding of ATP.

It localises to the cytoplasm. In terms of biological role, ATPase subunit of a proteasome-like degradation complex; this subunit has chaperone activity. The binding of ATP and its subsequent hydrolysis by HslU are essential for unfolding of protein substrates subsequently hydrolyzed by HslV. HslU recognizes the N-terminal part of its protein substrates and unfolds these before they are guided to HslV for hydrolysis. The polypeptide is ATP-dependent protease ATPase subunit HslU (Shewanella denitrificans (strain OS217 / ATCC BAA-1090 / DSM 15013)).